The following is a 309-amino-acid chain: S-methyl-5'-thioadenosine phosphorylase (309 aa).

Phosphate contacts are provided by residues threonine 19, 64-65 (RH), and 97-98 (SA). Methionine 201 provides a ligand contact to substrate. Serine 202 lines the phosphate pocket. Substrate is bound at residue 225-227 (DYD).

Belongs to the PNP/MTAP phosphorylase family. MTAP subfamily. As to quaternary structure, homotrimer.

The protein localises to the cytoplasm. The protein resides in the nucleus. It carries out the reaction S-methyl-5'-thioadenosine + phosphate = 5-(methylsulfanyl)-alpha-D-ribose 1-phosphate + adenine. Its pathway is amino-acid biosynthesis; L-methionine biosynthesis via salvage pathway; S-methyl-5-thio-alpha-D-ribose 1-phosphate from S-methyl-5'-thioadenosine (phosphorylase route): step 1/1. In terms of biological role, catalyzes the reversible phosphorylation of S-methyl-5'-thioadenosine (MTA) to adenine and 5-methylthioribose-1-phosphate. Involved in the breakdown of MTA, a major by-product of polyamine biosynthesis. Responsible for the first step in the methionine salvage pathway after MTA has been generated from S-adenosylmethionine. Has broad substrate specificity with 6-aminopurine nucleosides as preferred substrates. This is S-methyl-5'-thioadenosine phosphorylase from Tuber melanosporum (strain Mel28) (Perigord black truffle).